The primary structure comprises 64 residues: Large ribosomal subunit protein bL32 (64 aa).

This sequence belongs to the bacterial ribosomal protein bL32 family.

This is Large ribosomal subunit protein bL32 from Flavobacterium psychrophilum (strain ATCC 49511 / DSM 21280 / CIP 103535 / JIP02/86).